The sequence spans 116 residues: HTH-type transcriptional regulator AnsR (116 aa).

Residues 6–60 enclose the HTH cro/C1-type domain; that stretch reads LTELRKKKNWSLQYTADLLGIAKSTYAGYESGYRRPSLEALAMLADLFDTTCDEL. A DNA-binding region (H-T-H motif) is located at residues 17 to 36; it reads LQYTADLLGIAKSTYAGYES.

Functionally, transcriptional repressor for the ans operon coding for L-asparaginase and L-aspartase. NH4(+) may influence this repression. The chain is HTH-type transcriptional regulator AnsR (ansR) from Bacillus subtilis (strain 168).